The following is a 330-amino-acid chain: MPGPATDAGKIPFCDAKEEIRAGLESSEGGGGPERPGARGQRQNIVWRNVVLMSLLHLGAVYSLVLIPKAKPLTLLWAYFCFLLAALGVTAGAHRLWSHRSYRAKLPLRIFLAVANSMAFQNDIFEWSRDHRAHHKYSETDADPHNARRGFFFSHIGWLFVRKHRDVIEKGRKLDVTDLLADPVVRIQRKYYKISVVLMCFVVPTLVPWYIWGESLWNSYFLASILRYTISLNISWLVNSAAHMYGNRPYDKHISPRQNPLVALGAIGEGFHNYHHTFPFDYSASEFGLNFNPTTWFIDFMCWLGLATDRKRATKPMIEARKARTGDSSA.

Residues 1–49 (MPGPATDAGKIPFCDAKEEIRAGLESSEGGGGPERPGARGQRQNIVWRN) are Cytoplasmic-facing. Position 49 (Asn-49) interacts with substrate. The chain crosses the membrane as a helical span at residues 50–70 (VVLMSLLHLGAVYSLVLIPKA). Residues 71-72 (KP) are Lumenal-facing. The chain crosses the membrane as a helical span at residues 73–93 (LTLLWAYFCFLLAALGVTAGA). His-94 and His-99 together coordinate Fe cation. Positions 94-99 (HRLWSH) match the Histidine box-1 motif. At 94-193 (HRLWSHRSYR…VVRIQRKYYK (100 aa)) the chain is on the cytoplasmic side. Substrate-binding residues include Asn-122, Arg-129, and Asp-130. Positions 131, 134, and 135 each coordinate Fe cation. The Histidine box-2 signature appears at 131–135 (HRAHH). 2 residues coordinate substrate: Arg-162 and Lys-163. The chain crosses the membrane as a helical span at residues 194-214 (ISVVLMCFVVPTLVPWYIWGE). A topological domain (lumenal) is located at residue Ser-215. Residues 216–238 (LWNSYFLASILRYTISLNISWLV) traverse the membrane as a helical segment. Residue Trp-236 participates in substrate binding. Residues 239–330 (NSAAHMYGNR…RKARTGDSSA (92 aa)) lie on the Cytoplasmic side of the membrane. Fe cation contacts are provided by His-243, His-272, His-275, and His-276. A Histidine box-3 motif is present at residues 272–276 (HNYHH).

This sequence belongs to the fatty acid desaturase type 1 family. May self-associate and form homodimers. Requires Fe(2+) as cofactor. In terms of tissue distribution, detected in fetal brain, and at lower levels in fetal kidney. Detected in adult brain and pancreas, and at lower levels in kidney and lung. Expressed in spiral ganglion cells and the organ of Corti of fetal cochlea.

It is found in the endoplasmic reticulum membrane. It carries out the reaction octadecanoyl-CoA + 2 Fe(II)-[cytochrome b5] + O2 + 2 H(+) = (9Z)-octadecenoyl-CoA + 2 Fe(III)-[cytochrome b5] + 2 H2O. The enzyme catalyses hexadecanoyl-CoA + 2 Fe(II)-[cytochrome b5] + O2 + 2 H(+) = (9Z)-hexadecenoyl-CoA + 2 Fe(III)-[cytochrome b5] + 2 H2O. Functionally, stearoyl-CoA desaturase that utilizes O(2) and electrons from reduced cytochrome b5 to introduce the first double bond into saturated fatty acyl-CoA substrates. Catalyzes the insertion of a cis double bond at the delta-9 position into fatty acyl-CoA substrates including palmitoyl-CoA and stearoyl-CoA. Gives rise to a mixture of 16:1 and 18:1 unsaturated fatty acids. Involved in neuronal cell proliferation and differentiation through down-regulation of EGFR/AKT/MAPK and Wnt signaling pathways. This is Stearoyl-CoA desaturase 5 (SCD5) from Homo sapiens (Human).